The sequence spans 41 residues: MKIRNSLKSLKGRHRDNRVIRRRGRTYIINKTVRRFKARQG.

Belongs to the bacterial ribosomal protein bL36 family.

This is Large ribosomal subunit protein bL36 from Zymomonas mobilis subsp. mobilis (strain ATCC 31821 / ZM4 / CP4).